We begin with the raw amino-acid sequence, 60 residues long: Cytotoxin 1 (60 aa).

4 cysteine pairs are disulfide-bonded: cysteine 3/cysteine 21, cysteine 14/cysteine 38, cysteine 42/cysteine 53, and cysteine 54/cysteine 59.

It belongs to the three-finger toxin family. Short-chain subfamily. Type IA cytotoxin sub-subfamily. In terms of assembly, monomer in solution; Homodimer and oligomer in the presence of negatively charged lipids forming a pore with a size ranging between 20 and 30 Angstroms. In terms of tissue distribution, expressed by the venom gland.

It is found in the secreted. Its subcellular location is the target cell membrane. Functionally, shows cytolytic activity on many different cells by forming pore in lipid membranes. In vivo, increases heart rate or kills the animal by cardiac arrest. In addition, it binds to heparin with high affinity, interacts with Kv channel-interacting protein 1 (KCNIP1) in a calcium-independent manner, and binds to integrin alpha-V/beta-3 (ITGAV/ITGB3) with moderate affinity. In Naja naja (Indian cobra), this protein is Cytotoxin 1.